Here is a 1435-residue protein sequence, read N- to C-terminus: Gag-Pol polyprotein (1435 aa).

The N-myristoyl glycine; by host moiety is linked to residue G2. Residues 7–31 are interaction with Gp41; that stretch reads VLSGGELDKWEKIRLRPGGKKQYKL. The tract at residues 8–43 is interaction with host CALM1; the sequence is LSGGELDKWEKIRLRPGGKKQYKLKHIVWASRELER. The interval 12-19 is interaction with host AP3D1; sequence ELDKWEKI. Residues 14-33 are interaction with membrane phosphatidylinositol 4,5-bisphosphate and RNA; sequence DKWEKIRLRPGGKKQYKLKH. Positions 16-22 match the Nuclear export signal motif; it reads WEKIRLR. A Nuclear localization signal motif is present at residues 26 to 32; the sequence is KKQYKLK. The tract at residues 73 to 77 is interaction with membrane phosphatidylinositol 4,5-bisphosphate; sequence EELRS. Residues 106 to 128 form a disordered region; sequence EEQNKSKKKAQQAAADTGNNSQV. The residue at position 132 (Y132) is a Phosphotyrosine; by host. S148 carries the post-translational modification Phosphoserine; by host MAPK1. Residues 189–227 form an interaction with human PPIA/CYPA and NUP153 region; that stretch reads NTVGGHQAAMQMLKETINEEAAEWDRLHPVHAGPIAPGQ. Positions 277–363 are dimerization/Multimerization of capsid protein p24; it reads YSPTSILDIR…GGPGHKARVL (87 aa). CCHC-type zinc fingers lie at residues 390–407 and 411–428; these read VKCF…NCRA and KGCW…DCTE. Residues 444 to 464 are disordered; it reads KAREFSSEQTRANSPTRRELQ. The segment at 489–493 is dimerization of protease; the sequence is PQITL. A Peptidase A2 domain is found at 508–577; it reads KEALLDTGAD…TPVNIIGRNL (70 aa). D513 serves as the catalytic For protease activity; shared with dimeric partner. Dimerization of protease stretches follow at residues 537–543 and 576–588; these read GIGGFIK and NLLT…LNFP. Positions 631 to 821 constitute a Reverse transcriptase domain; it reads EGKISKIGPE…PPFLWMGYEL (191 aa). Residues D697, D772, and D773 each contribute to the Mg(2+) site. The segment at 814–822 is RT 'primer grip'; that stretch reads FLWMGYELH. Positions 985 to 1001 match the Tryptophan repeat motif motif; sequence WEAWWTEYWQATWIPEW. The region spanning 1021–1144 is the RNase H type-1 domain; that stretch reads IIGAETFYVD…VDGLVSAGIR (124 aa). Mg(2+) is bound by residues D1030, E1065, D1085, and D1136. The segment at 1150 to 1191 adopts an Integrase-type zinc-finger fold; the sequence is DGIDKAQEEHEKYHSNWRAMASDFNLPPVVAKEIVASCDKCQ. H1159, H1163, C1187, and C1190 together coordinate Zn(2+). Residues 1201 to 1351 enclose the Integrase catalytic domain; that stretch reads VDCSPGIWQL…SAGERIVDII (151 aa). Positions 1211, 1263, and 1299 each coordinate Mg(2+). Residues 1370-1417 constitute a DNA-binding region (integrase-type); that stretch reads FRVYYRDSRDPVWKGPAKLLWKGEGAVVIQDNSDIKVVPRRKAKIIRD.

In terms of assembly, homotrimer; further assembles as hexamers of trimers. Matrix protein p17: Interacts with gp41 (via C-terminus). Interacts with host CALM1; this interaction induces a conformational change in the Matrix protein, triggering exposure of the myristate group. Interacts with host AP3D1; this interaction allows the polyprotein trafficking to multivesicular bodies during virus assembly. Part of the pre-integration complex (PIC) which is composed of viral genome, matrix protein, Vpr and integrase. As to quaternary structure, homodimer; the homodimer further multimerizes as homohexamers or homopentamers. Interacts with human PPIA/CYPA; This interaction stabilizes the capsid. Interacts with human NUP153. Interacts with host PDZD8; this interaction stabilizes the capsid. Interacts with monkey TRIM5; this interaction destabilizes the capsid. Homodimer, whose active site consists of two apposed aspartic acid residues. In terms of assembly, heterodimer of p66 RT and p51 RT (RT p66/p51). Heterodimerization of RT is essential for DNA polymerase activity. The overall folding of the subdomains is similar in p66 RT and p51 RT but the spatial arrangements of the subdomains are dramatically different. As to quaternary structure, homotetramer; may further associate as a homohexadecamer. Part of the pre-integration complex (PIC) which is composed of viral genome, matrix protein, Vpr and integrase. Interacts with human SMARCB1/INI1 and human PSIP1/LEDGF isoform 1. Interacts with human KPNA3; this interaction might play a role in nuclear import of the pre-integration complex. Interacts with human NUP153; this interaction might play a role in nuclear import of the pre-integration complex. Mg(2+) is required as a cofactor. In terms of processing, specific enzymatic cleavages by the viral protease yield mature proteins. The protease is released by autocatalytic cleavage. The polyprotein is cleaved during and after budding, this process is termed maturation. Proteolytic cleavage of p66 RT removes the RNase H domain to yield the p51 RT subunit. Nucleocapsid protein p7 might be further cleaved after virus entry. Post-translationally, tyrosine phosphorylated presumably in the virion by a host kinase. Phosphorylation is apparently not a major regulator of membrane association. Phosphorylated possibly by host MAPK1; this phosphorylation is necessary for Pin1-mediated virion uncoating. In terms of processing, methylated by host PRMT6, impairing its function by reducing RNA annealing and the initiation of reverse transcription.

It localises to the host cell membrane. The protein localises to the host endosome. Its subcellular location is the host multivesicular body. The protein resides in the virion membrane. It is found in the host nucleus. It localises to the host cytoplasm. The protein localises to the virion. The catalysed reaction is Specific for a P1 residue that is hydrophobic, and P1' variable, but often Pro.. It carries out the reaction Endohydrolysis of RNA in RNA/DNA hybrids. Three different cleavage modes: 1. sequence-specific internal cleavage of RNA. Human immunodeficiency virus type 1 and Moloney murine leukemia virus enzymes prefer to cleave the RNA strand one nucleotide away from the RNA-DNA junction. 2. RNA 5'-end directed cleavage 13-19 nucleotides from the RNA end. 3. DNA 3'-end directed cleavage 15-20 nucleotides away from the primer terminus.. The enzyme catalyses 3'-end directed exonucleolytic cleavage of viral RNA-DNA hybrid.. It catalyses the reaction DNA(n) + a 2'-deoxyribonucleoside 5'-triphosphate = DNA(n+1) + diphosphate. With respect to regulation, protease: The viral protease is inhibited by many synthetic protease inhibitors (PIs), such as amprenavir, atazanavir, indinavir, loprinavir, nelfinavir, ritonavir and saquinavir. Use of protease inhibitors in tritherapy regimens permit more ambitious therapeutic strategies. Reverse transcriptase/ribonuclease H: RT can be inhibited either by nucleoside RT inhibitors (NRTIs) or by non nucleoside RT inhibitors (NNRTIs). NRTIs act as chain terminators, whereas NNRTIs inhibit DNA polymerization by binding a small hydrophobic pocket near the RT active site and inducing an allosteric change in this region. Classical NRTIs are abacavir, adefovir (PMEA), didanosine (ddI), lamivudine (3TC), stavudine (d4T), tenofovir (PMPA), zalcitabine (ddC), and zidovudine (AZT). Classical NNRTIs are atevirdine (BHAP U-87201E), delavirdine, efavirenz (DMP-266), emivirine (I-EBU), and nevirapine (BI-RG-587). The tritherapies used as a basic effective treatment of AIDS associate two NRTIs and one NNRTI. In terms of biological role, mediates, with Gag polyprotein, the essential events in virion assembly, including binding the plasma membrane, making the protein-protein interactions necessary to create spherical particles, recruiting the viral Env proteins, and packaging the genomic RNA via direct interactions with the RNA packaging sequence (Psi). Gag-Pol polyprotein may regulate its own translation, by the binding genomic RNA in the 5'-UTR. At low concentration, the polyprotein would promote translation, whereas at high concentration, the polyprotein would encapsidate genomic RNA and then shut off translation. Functionally, targets the polyprotein to the plasma membrane via a multipartite membrane-binding signal, that includes its myristoylated N-terminus. Matrix protein is part of the pre-integration complex. Implicated in the release from host cell mediated by Vpu. Binds to RNA. Its function is as follows. Forms the conical core that encapsulates the genomic RNA-nucleocapsid complex in the virion. Most core are conical, with only 7% tubular. The core is constituted by capsid protein hexamer subunits. The core is disassembled soon after virion entry. Host restriction factors such as TRIM5-alpha or TRIMCyp bind retroviral capsids and cause premature capsid disassembly, leading to blocks in reverse transcription. Capsid restriction by TRIM5 is one of the factors which restricts HIV-1 to the human species. Host PIN1 apparently facilitates the virion uncoating. On the other hand, interactions with PDZD8 or CYPA stabilize the capsid. Encapsulates and protects viral dimeric unspliced genomic RNA (gRNA). Binds these RNAs through its zinc fingers. Acts as a nucleic acid chaperone which is involved in rearangement of nucleic acid secondary structure during gRNA retrotranscription. Also facilitates template switch leading to recombination. As part of the polyprotein, participates in gRNA dimerization, packaging, tRNA incorporation and virion assembly. In terms of biological role, aspartyl protease that mediates proteolytic cleavages of Gag and Gag-Pol polyproteins during or shortly after the release of the virion from the plasma membrane. Cleavages take place as an ordered, step-wise cascade to yield mature proteins. This process is called maturation. Displays maximal activity during the budding process just prior to particle release from the cell. Also cleaves Nef and Vif, probably concomitantly with viral structural proteins on maturation of virus particles. Hydrolyzes host EIF4GI and PABP1 in order to shut off the capped cellular mRNA translation. The resulting inhibition of cellular protein synthesis serves to ensure maximal viral gene expression and to evade host immune response. Also mediates cleavage of host YTHDF3. Mediates cleavage of host CARD8, thereby activating the CARD8 inflammasome, leading to the clearance of latent HIV-1 in patient CD4(+) T-cells after viral reactivation; in contrast, HIV-1 can evade CARD8-sensing when its protease remains inactive in infected cells prior to viral budding. Functionally, multifunctional enzyme that converts the viral RNA genome into dsDNA in the cytoplasm, shortly after virus entry into the cell. This enzyme displays a DNA polymerase activity that can copy either DNA or RNA templates, and a ribonuclease H (RNase H) activity that cleaves the RNA strand of RNA-DNA heteroduplexes in a partially processive 3' to 5' endonucleasic mode. Conversion of viral genomic RNA into dsDNA requires many steps. A tRNA(3)-Lys binds to the primer-binding site (PBS) situated at the 5'-end of the viral RNA. RT uses the 3' end of the tRNA primer to perform a short round of RNA-dependent minus-strand DNA synthesis. The reading proceeds through the U5 region and ends after the repeated (R) region which is present at both ends of viral RNA. The portion of the RNA-DNA heteroduplex is digested by the RNase H, resulting in a ssDNA product attached to the tRNA primer. This ssDNA/tRNA hybridizes with the identical R region situated at the 3' end of viral RNA. This template exchange, known as minus-strand DNA strong stop transfer, can be either intra- or intermolecular. RT uses the 3' end of this newly synthesized short ssDNA to perform the RNA-dependent minus-strand DNA synthesis of the whole template. RNase H digests the RNA template except for two polypurine tracts (PPTs) situated at the 5'-end and near the center of the genome. It is not clear if both polymerase and RNase H activities are simultaneous. RNase H probably can proceed both in a polymerase-dependent (RNA cut into small fragments by the same RT performing DNA synthesis) and a polymerase-independent mode (cleavage of remaining RNA fragments by free RTs). Secondly, RT performs DNA-directed plus-strand DNA synthesis using the PPTs that have not been removed by RNase H as primers. PPTs and tRNA primers are then removed by RNase H. The 3' and 5' ssDNA PBS regions hybridize to form a circular dsDNA intermediate. Strand displacement synthesis by RT to the PBS and PPT ends produces a blunt ended, linear dsDNA copy of the viral genome that includes long terminal repeats (LTRs) at both ends. Its function is as follows. Catalyzes viral DNA integration into the host chromosome, by performing a series of DNA cutting and joining reactions. This enzyme activity takes place after virion entry into a cell and reverse transcription of the RNA genome in dsDNA. The first step in the integration process is 3' processing. This step requires a complex comprising the viral genome, matrix protein, Vpr and integrase. This complex is called the pre-integration complex (PIC). The integrase protein removes 2 nucleotides from each 3' end of the viral DNA, leaving recessed CA OH's at the 3' ends. In the second step, the PIC enters cell nucleus. This process is mediated through integrase and Vpr proteins, and allows the virus to infect a non dividing cell. This ability to enter the nucleus is specific of lentiviruses, other retroviruses cannot and rely on cell division to access cell chromosomes. In the third step, termed strand transfer, the integrase protein joins the previously processed 3' ends to the 5' ends of strands of target cellular DNA at the site of integration. The 5'-ends are produced by integrase-catalyzed staggered cuts, 5 bp apart. A Y-shaped, gapped, recombination intermediate results, with the 5'-ends of the viral DNA strands and the 3' ends of target DNA strands remaining unjoined, flanking a gap of 5 bp. The last step is viral DNA integration into host chromosome. This involves host DNA repair synthesis in which the 5 bp gaps between the unjoined strands are filled in and then ligated. Since this process occurs at both cuts flanking the HIV genome, a 5 bp duplication of host DNA is produced at the ends of HIV-1 integration. Alternatively, Integrase may catalyze the excision of viral DNA just after strand transfer, this is termed disintegration. The sequence is that of Gag-Pol polyprotein (gag-pol) from Human immunodeficiency virus type 1 group M subtype B (isolate NY5) (HIV-1).